The primary structure comprises 709 residues: ATP-binding cassette sub-family F member 3 (709 aa).

A2 bears the N-acetylalanine mark. S83 is subject to Phosphoserine. Residues 129-143 (RLKAKQEKRSEKETL) are compositionally biased toward basic and acidic residues. Residues 129–171 (RLKAKQEKRSEKETLKTSNPLVLEEASASQAGSRKESRLESSG) form a disordered region. Residues S155, S157, and S161 each carry the phosphoserine modification. Residues 161–171 (SRKESRLESSG) show a composition bias toward basic and acidic residues. ABC transporter domains are found at residues 178–424 (VRIE…LNQQ) and 492–707 (LQLD…RREG). 210–217 (GRNGLGKT) contacts ATP. S283 is modified (phosphoserine). Residue 525 to 532 (GENGAGKS) participates in ATP binding.

This sequence belongs to the ABC transporter superfamily. ABCF family. EF3 subfamily.

Displays an antiviral effect against flaviviruses such as west Nile virus (WNV) in the presence of OAS1B. The polypeptide is ATP-binding cassette sub-family F member 3 (Abcf3) (Mus musculus (Mouse)).